Reading from the N-terminus, the 276-residue chain is Large ribosomal subunit protein uL2 (276 aa).

Disordered regions lie at residues 1–20 (MGIK…TTND) and 219–276 (TVRG…RRKK). A compositionally biased stretch (polar residues) spans 7–20 (NPTTNGRRNMTTND).

This sequence belongs to the universal ribosomal protein uL2 family. As to quaternary structure, part of the 50S ribosomal subunit. Forms a bridge to the 30S subunit in the 70S ribosome.

In terms of biological role, one of the primary rRNA binding proteins. Required for association of the 30S and 50S subunits to form the 70S ribosome, for tRNA binding and peptide bond formation. It has been suggested to have peptidyltransferase activity; this is somewhat controversial. Makes several contacts with the 16S rRNA in the 70S ribosome. The protein is Large ribosomal subunit protein uL2 of Bacillus anthracis (strain A0248).